The sequence spans 241 residues: 2-C-methyl-D-erythritol 4-phosphate cytidylyltransferase (241 aa).

Belongs to the IspD/TarI cytidylyltransferase family. IspD subfamily.

It carries out the reaction 2-C-methyl-D-erythritol 4-phosphate + CTP + H(+) = 4-CDP-2-C-methyl-D-erythritol + diphosphate. Its pathway is isoprenoid biosynthesis; isopentenyl diphosphate biosynthesis via DXP pathway; isopentenyl diphosphate from 1-deoxy-D-xylulose 5-phosphate: step 2/6. Catalyzes the formation of 4-diphosphocytidyl-2-C-methyl-D-erythritol from CTP and 2-C-methyl-D-erythritol 4-phosphate (MEP). The protein is 2-C-methyl-D-erythritol 4-phosphate cytidylyltransferase of Baumannia cicadellinicola subsp. Homalodisca coagulata.